A 140-amino-acid polypeptide reads, in one-letter code: Ribosome maturation factor RimP (140 aa).

Belongs to the RimP family.

It is found in the cytoplasm. In terms of biological role, required for maturation of 30S ribosomal subunits. This chain is Ribosome maturation factor RimP, found in Campylobacter jejuni subsp. jejuni serotype O:23/36 (strain 81-176).